Here is a 244-residue protein sequence, read N- to C-terminus: ATP synthase subunit 4, mitochondrial (244 aa).

The transit peptide at 1 to 36 directs the protein to the mitochondrion; the sequence is MSSKLFCLRSFPSVQRTAWQRLVLPSTRKFSLTPTT.

Belongs to the eukaryotic ATPase B chain family. F-type ATPases have 2 components, CF(1) - the catalytic core - and CF(0) - the membrane proton channel. In yeast, the dimeric form of ATP synthase consists of 17 polypeptides: alpha, beta, gamma, delta, epsilon, 4 (B), 5 (OSCP), 6 (A), 8, 9 (C), d, E (Tim11), f, g, h, i/j and k.

Its subcellular location is the mitochondrion. It localises to the mitochondrion inner membrane. In terms of biological role, mitochondrial membrane ATP synthase (F(1)F(0) ATP synthase or Complex V) produces ATP from ADP in the presence of a proton gradient across the membrane which is generated by electron transport complexes of the respiratory chain. F-type ATPases consist of two structural domains, F(1) - containing the extramembraneous catalytic core, and F(0) - containing the membrane proton channel, linked together by a central stalk and a peripheral stalk. During catalysis, ATP synthesis in the catalytic domain of F(1) is coupled via a rotary mechanism of the central stalk subunits to proton translocation. Part of the complex F(0) domain and the peripheric stalk, which acts as a stator to hold the catalytic alpha(3)beta(3) subcomplex and subunit a/ATP6 static relative to the rotary elements. This chain is ATP synthase subunit 4, mitochondrial (atp4), found in Schizosaccharomyces pombe (strain 972 / ATCC 24843) (Fission yeast).